Here is a 588-residue protein sequence, read N- to C-terminus: Calicin (588 aa).

Residues 12 to 124 (SFVLQNLNRQ…RLRVHCNDFL (113 aa)) form the BTB domain. Positions 133 to 235 (CLRYLFLAEL…NAVSNKTLVF (103 aa)) constitute a BACK domain. Ser149 carries the phosphoserine modification. Kelch repeat units follow at residues 280-327 (SVVI…SAGR), 328-375 (YIYI…TCGG), 377-423 (VYSV…TKGD), 425-475 (HLYI…SFQQ), 476-525 (DNIL…IGDS), and 526-580 (KVFV…LAKL).

Interacts with CYLC1; the interaction may be relevant for proper acrosome attachment to the nuclear envelope. In terms of tissue distribution, expressed in testis, in spermatozoa (at protein level).

The protein resides in the cytoplasm. It is found in the cytoskeleton. Its subcellular location is the perinuclear theca. It localises to the calyx. In terms of biological role, required for both nuclear and acrosomal shaping during spermiogenesis. The sequence is that of Calicin (CCIN) from Homo sapiens (Human).